Consider the following 548-residue polypeptide: Chaperonin GroEL (548 aa).

ATP-binding positions include threonine 30–proline 33, lysine 51, aspartate 87–threonine 91, glycine 415, asparagine 479–alanine 481, and aspartate 495.

It belongs to the chaperonin (HSP60) family. As to quaternary structure, forms a cylinder of 14 subunits composed of two heptameric rings stacked back-to-back. Interacts with the co-chaperonin GroES.

Its subcellular location is the cytoplasm. It catalyses the reaction ATP + H2O + a folded polypeptide = ADP + phosphate + an unfolded polypeptide.. Functionally, together with its co-chaperonin GroES, plays an essential role in assisting protein folding. The GroEL-GroES system forms a nano-cage that allows encapsulation of the non-native substrate proteins and provides a physical environment optimized to promote and accelerate protein folding. The sequence is that of Chaperonin GroEL from Vibrio campbellii (strain ATCC BAA-1116).